Here is a 356-residue protein sequence, read N- to C-terminus: MSRFWSPVVHRLTPYVPGEQPKLTNLIKLNTNESPYGPPPGALEAIRAAADDTLRLYSDPTSERLRAAIAQAHDVGMDEIFVGNGSDEVLAHAFHALLQHDAPLLTPDITYSFYPVYCGLYGIAHQPVPLDDAMRIDVDDYRRPCAGLVLPNPNAPTGIALGLGQIETLLRAQPDRVVVIDEAYVDFGADTAIPLVRRFPNLLVVRTLSKSHALAGLRVGYAIGHPDLVEALNRVKDSFNSYPLDRLAQAGAAAAIADREWLARTTGKIIKTRIGLTSSLRGLGFEVLPSQANFVFARHPDRDAAHLAAALRERAIIVRHFRTPRIAEWLRITVGTDEECRVLTDALGTILTRNAD.

N6-(pyridoxal phosphate)lysine is present on K210.

This sequence belongs to the class-II pyridoxal-phosphate-dependent aminotransferase family. Histidinol-phosphate aminotransferase subfamily. In terms of assembly, homodimer. Pyridoxal 5'-phosphate serves as cofactor.

The catalysed reaction is L-histidinol phosphate + 2-oxoglutarate = 3-(imidazol-4-yl)-2-oxopropyl phosphate + L-glutamate. The protein operates within amino-acid biosynthesis; L-histidine biosynthesis; L-histidine from 5-phospho-alpha-D-ribose 1-diphosphate: step 7/9. The protein is Histidinol-phosphate aminotransferase of Gluconacetobacter diazotrophicus (strain ATCC 49037 / DSM 5601 / CCUG 37298 / CIP 103539 / LMG 7603 / PAl5).